We begin with the raw amino-acid sequence, 284 residues long: uncharacterized protein (284 aa).

Residues 1-23 (MKRGCAIAVMICGLITSVSAASA) form the signal peptide.

The protein belongs to the surface antigen msp4 family.

This is an uncharacterized protein from Brucella melitensis biotype 1 (strain ATCC 23456 / CCUG 17765 / NCTC 10094 / 16M).